Here is an 894-residue protein sequence, read N- to C-terminus: Mitogen-activated protein kinase kinase kinase kinase 3 (894 aa).

Methionine 1 carries the post-translational modification N-acetylmethionine. The 258-residue stretch at 16–273 (FELIQRIGSG…AEKLLQHPFV (258 aa)) folds into the Protein kinase domain. ATP is bound by residues 22–30 (IGSGTYGDV) and lysine 45. Aspartate 136 serves as the catalytic Proton acceptor. Position 329 is a phosphoserine (serine 329). Residues 339 to 358 (DPPLRKETEPHHELPDSDGF) are disordered. Basic and acidic residues predominate over residues 340-353 (PPLRKETEPHHELP). Phosphoserine is present on serine 398. Residues 408 to 537 (HVAHLEDDEG…VPKPISNGLP (130 aa)) form a disordered region. Residues 473–487 (HVPPRPPPPRLPPQK) show a composition bias toward pro residues. Residues 508 to 520 (LYQQQSEQRGTNL) show a composition bias toward polar residues. The CNH domain maps to 556–867 (PLKIHCATSW…IFRLLGSDRV (312 aa)).

The protein belongs to the protein kinase superfamily. STE Ser/Thr protein kinase family. STE20 subfamily. As to quaternary structure, interacts with SH3GL2. Interaction appears to regulate MAP4K3-mediated JNK activation. The cofactor is Mg(2+).

The enzyme catalyses L-seryl-[protein] + ATP = O-phospho-L-seryl-[protein] + ADP + H(+). It catalyses the reaction L-threonyl-[protein] + ATP = O-phospho-L-threonyl-[protein] + ADP + H(+). Functionally, serine/threonine kinase that plays a role in the response to environmental stress. Appears to act upstream of the JUN N-terminal pathway. Activator of the Hippo signaling pathway which plays a pivotal role in organ size control and tumor suppression by restricting proliferation and promoting apoptosis. MAP4Ks act in parallel to and are partially redundant with STK3/MST2 and STK4/MST2 in the phosphorylation and activation of LATS1/2, and establish MAP4Ks as components of the expanded Hippo pathway. The protein is Mitogen-activated protein kinase kinase kinase kinase 3 (Map4k3) of Mus musculus (Mouse).